We begin with the raw amino-acid sequence, 149 residues long: Nucleoside diphosphate kinase (149 aa).

Residues Lys9, Phe57, Arg85, Thr91, Arg102, and Asn112 each contribute to the ATP site. The active-site Pros-phosphohistidine intermediate is His115.

This sequence belongs to the NDK family. Homotetramer. Requires Mg(2+) as cofactor.

The protein resides in the cytoplasm. It catalyses the reaction dZDP + ATP = dZTP + ADP. The enzyme catalyses a 2'-deoxyribonucleoside 5'-diphosphate + ATP = a 2'-deoxyribonucleoside 5'-triphosphate + ADP. The catalysed reaction is a ribonucleoside 5'-diphosphate + ATP = a ribonucleoside 5'-triphosphate + ADP. It participates in purine metabolism. Its function is as follows. Major role in the synthesis of nucleoside triphosphates other than ATP. The ATP gamma phosphate is transferred to the NDP beta phosphate via a ping-pong mechanism, using a phosphorylated active-site intermediate. In terms of biological role, (Microbial infection) Catalyzes the phosphorylation of dZDP to dZTP, when the bacterium is infected by a phage that produces the substrate for the synthesis of dZTP (2- amino-2'-deoxyadenosine 5'-triphosphate), which is then used by the phage as a DNA polymerase substrate. The polypeptide is Nucleoside diphosphate kinase (Picosynechococcus sp. (strain ATCC 27264 / PCC 7002 / PR-6) (Agmenellum quadruplicatum)).